A 98-amino-acid polypeptide reads, in one-letter code: Small ribosomal subunit protein uS17 (98 aa).

This sequence belongs to the universal ribosomal protein uS17 family. Part of the 30S ribosomal subunit.

Functionally, one of the primary rRNA binding proteins, it binds specifically to the 5'-end of 16S ribosomal RNA. The protein is Small ribosomal subunit protein uS17 of Carboxydothermus hydrogenoformans (strain ATCC BAA-161 / DSM 6008 / Z-2901).